Here is a 440-residue protein sequence, read N- to C-terminus: Chromosome partition protein MukF (440 aa).

The interval Leu-208–Ile-236 is leucine-zipper.

The protein belongs to the MukF family. As to quaternary structure, interacts, and probably forms a ternary complex, with MukE and MukB via its C-terminal region. The complex formation is stimulated by calcium or magnesium. It is required for an interaction between MukE and MukB.

The protein resides in the cytoplasm. The protein localises to the nucleoid. Its function is as follows. Involved in chromosome condensation, segregation and cell cycle progression. May participate in facilitating chromosome segregation by condensation DNA from both sides of a centrally located replisome during cell division. Not required for mini-F plasmid partitioning. Probably acts via its interaction with MukB and MukE. Overexpression results in anucleate cells. It has a calcium binding activity. The sequence is that of Chromosome partition protein MukF from Salmonella paratyphi B (strain ATCC BAA-1250 / SPB7).